The following is a 1129-amino-acid chain: MLEQAEKLMKRNSSGAMSAPQSKPLARSRSSTMPTTTQKRVRSSQQSEGEPEYNIKVYVRCRSRNEREIREKSSVVISTLGNNGREVILTNPGTGSNKTYTFDRVFGVESDQESMFNQVARAYINEMIEGYNCTVFAYGQTGTGKTYTMSGDITMMGSSEDDPNFVLLSEHAGIIPRVLVELFRELREVSEDYSVKVSFLELYNEKLRDLLVDDKDVSLEDHNFNGMAPPESIRIYDSLKTDRTSPNGYSIFVKGMEEMYIRSAQEGLKLLMDGSLKRKVAATKCNDLSSRSHTIFTITTNVTKIHPISGEQYVKVGKLNLVDLAGSENINRSGAENKRAQEAGLINKSLLTLGRVINALVDHSQHIPYRESKLTRLLQDSLGGKTKTCIIATISPAKISMEETVSTLEYATRAKSIKNTPQVNQLMAKESCIIEYIQEIERLRKELRASHSKEGIYITQEKFETYESNSILVEEQQAKIDNLQEQLRRLKEKFLEQTKLIKEKDGQIKELDVANRKYLEQSKDLTIYINGIHSKLEDYEHTMIGIHNNNMKLLEDINDNRGNIHEDLLAKVDHIETCNLIISREITSLISIRNVLQAYSDRFKTVLGGVFEELQEKLTQVGRTTEESQLDVDLSFVDEKFEEVTDIIKATCENLVRTMDEHVSNMKLETTDLTSSCASLLEKECQALHGKLQKYVESMKQELNSTLQEMVRDLDMKASSMLNVVQCTKDGLISHKKELEADLESQKREHFDIAQTMEEQLQKIVGKERQNIQESMKASYDFLMKQMVETELRQKNFEESIVSKVKGLLSHSNNGMSKMSSYAVGRLYDSAIGGVNSIENTVSSATFSMKNDLQEFQMDISPICDSRRFGDEFTAVETRISEAIREELTPKLQDITSKACNLIGLGVQDINQKALGVSDDQRRELRSVINNTNNHADRLRSEIGTLVNYVSQEHRDNIMQISQTQDEILQEQIASIGRTFDVLGNINKPDANVRTSVPIEHELNSAINELPPLYMPQRPLSLCSHGRQLLDEAYSGNENLSPSTGKFSNFPTPCGDMSAQTPTTPMPVPDQPLTKMPVPQTISSLRSLRRLTMDICEHSADMTLGSIHESQKAMDSSRRYTLEPRLFEK.

The disordered stretch occupies residues 1–49; the sequence is MLEQAEKLMKRNSSGAMSAPQSKPLARSRSSTMPTTTQKRVRSSQQSEG. 2 stretches are compositionally biased toward polar residues: residues 11–21 and 28–48; these read RNSSGAMSAPQ and SRSSTMPTTTQKRVRSSQQSE. A Kinesin motor domain is found at 54 to 417; it reads NIKVYVRCRS…LEYATRAKSI (364 aa). 139-146 contacts ATP; it reads GQTGTGKT. Coiled-coil stretches lie at residues 422-513, 681-765, and 919-948; these read QVNQ…ELDV, LEKE…QKIV, and DDQRRELRSVINNTNNHADRLRSEIGTLVN.

The protein belongs to the TRAFAC class myosin-kinesin ATPase superfamily. Kinesin family. BimC subfamily.

It localises to the cytoplasm. The protein localises to the cytoskeleton. It is found in the spindle. Functionally, required for assembly of the mitotic spindle. Interacts with spindle microtubules to produce an outwardly directed force acting upon the poles. Following spindle assembly, CIN8 and KIP1 apparently act to oppose a force that draws separated poles back together. This force seems to be mediate by KAR3. In Eremothecium gossypii (strain ATCC 10895 / CBS 109.51 / FGSC 9923 / NRRL Y-1056) (Yeast), this protein is Kinesin-like protein KIP1 (KIP1).